The following is a 420-amino-acid chain: Zinc finger protein Pegasus (420 aa).

Residue Lys-5 forms a Glycyl lysine isopeptide (Lys-Gly) (interchain with G-Cter in SUMO2) linkage. 3 C2H2-type zinc fingers span residues 82-104 (LKCR…IRIH), 110-132 (HRCH…MRSH), and 138-161 (YKCE…RRKH). Lys-185 is covalently cross-linked (Glycyl lysine isopeptide (Lys-Gly) (interchain with G-Cter in SUMO2)). Composition is skewed to polar residues over residues 223-236 (QTDS…TTPT) and 262-273 (LSSLPPENQNPA). 2 disordered regions span residues 223–247 (QTDS…QELM) and 262–356 (LSSL…PALP). Residues 290-311 (QPSTQAVVSAVSASIPQSSSPT) show a composition bias toward low complexity. A compositionally biased stretch (polar residues) spans 332–349 (SEPSAHTSTPSIGNSQPS). Residues 364-387 (HHCQHCDMYFFADNILYTIHMGCH) form a C2H2-type 4; degenerate zinc finger. The C2H2-type 5 zinc-finger motif lies at 393–417 (FQCNICGCKCKNKYDFACHFARGQH).

The protein belongs to the Ikaros C2H2-type zinc-finger protein family. Self-associates. Interacts with other family members; IKZF1, IKZF2, IKZF3 and IKZF4.

It localises to the nucleus. Its function is as follows. Transcriptional repressor that binds the core 5'GNNTGTNG-3' DNA consensus sequence. Involved in megakaryocyte differentiation. The protein is Zinc finger protein Pegasus (IKZF5) of Pongo abelii (Sumatran orangutan).